An 85-amino-acid polypeptide reads, in one-letter code: uncharacterized protein (85 aa).

Residues 35–85 form a disordered region; that stretch reads SDKDAPFSTQALTRSKSKRKRSALPVANGLKKPTRSIKRPSRGERLSATTI.

This is an uncharacterized protein from Pasteurella multocida (strain Pm70).